Reading from the N-terminus, the 308-residue chain is Methionyl-tRNA formyltransferase (308 aa).

110–113 (SLLP) provides a ligand contact to (6S)-5,6,7,8-tetrahydrofolate.

It belongs to the Fmt family.

The enzyme catalyses L-methionyl-tRNA(fMet) + (6R)-10-formyltetrahydrofolate = N-formyl-L-methionyl-tRNA(fMet) + (6S)-5,6,7,8-tetrahydrofolate + H(+). Functionally, attaches a formyl group to the free amino group of methionyl-tRNA(fMet). The formyl group appears to play a dual role in the initiator identity of N-formylmethionyl-tRNA by promoting its recognition by IF2 and preventing the misappropriation of this tRNA by the elongation apparatus. The protein is Methionyl-tRNA formyltransferase of Neisseria gonorrhoeae (strain ATCC 700825 / FA 1090).